A 62-amino-acid polypeptide reads, in one-letter code: Short neurotoxin 1 (62 aa).

Residues 1-16 are compositionally biased toward polar residues; sequence LECHNQQSIQTPTTTG. A disordered region spans residues 1–20; sequence LECHNQQSIQTPTTTGCSGG. 4 disulfide bridges follow: cysteine 3–cysteine 24, cysteine 17–cysteine 41, cysteine 43–cysteine 54, and cysteine 55–cysteine 60.

This sequence belongs to the three-finger toxin family. Short-chain subfamily. Type I alpha-neurotoxin sub-subfamily. As to expression, expressed by the venom gland.

It is found in the secreted. Its function is as follows. Binds to muscle nicotinic acetylcholine receptor (nAChR) and inhibit acetylcholine from binding to the receptor, thereby impairing neuromuscular transmission. The protein is Short neurotoxin 1 of Naja kaouthia (Monocled cobra).